Consider the following 112-residue polypeptide: Nucleoid-associated protein BCI_0116 (112 aa).

This sequence belongs to the YbaB/EbfC family. Homodimer.

It localises to the cytoplasm. The protein resides in the nucleoid. Binds to DNA and alters its conformation. May be involved in regulation of gene expression, nucleoid organization and DNA protection. The polypeptide is Nucleoid-associated protein BCI_0116 (Baumannia cicadellinicola subsp. Homalodisca coagulata).